The sequence spans 582 residues: MGLRHLVLCPGSRSGPLALAAGGMARTNRLRLSTAIDERSAAFLALGFSTATGTAAAVVTTSGTAVANLLPAAVEADRSCQPLLLLTADRPYRLKDCGANQTVNQETFLSPACRWIGQGPREGLHLFSKETLESFAEKAWQRAHHPAGAVHLNLPFEEPLHLSEEEQRMIWKGWSPKIPRSSPIKPINLAMAAEGTNGVTDQAPFALDPLRPGVVIAGAWRGLSKDLFAFQQSLREWQALSGWPVLADPLSALPSDQPGLIRSWELLLATGLLGSQEQLQVLRLGPMSASRSLEAWLKSFGDGQLLITEGDSRCLDPLGLSVQWNHGLTSWWQHHHHRWIDADAASQQATKALLRKWQISDRFAQEWLDQQLPLQGAITEPALARWLSRLLPTELPIMLAASSPVRDWLAYADKSLFSRRCFSFRGASGIDGTLSLSMGLAMALGPTLLVSGDLALLHDSNGWLLAHPQRPPLVVVLIDNGGGGIFEQLLVKTAPSEAFEQLFAMPQEVDPLALAGAHNIPHRQVACLEDLPAALEWGLFQAGPVLIRVCTHRRQDSSMRQQLREGLMMHLQSISQNGHIDL.

It belongs to the TPP enzyme family. MenD subfamily. As to quaternary structure, homodimer. Mg(2+) is required as a cofactor. It depends on Mn(2+) as a cofactor. Requires thiamine diphosphate as cofactor.

The catalysed reaction is isochorismate + 2-oxoglutarate + H(+) = 5-enolpyruvoyl-6-hydroxy-2-succinyl-cyclohex-3-ene-1-carboxylate + CO2. It functions in the pathway quinol/quinone metabolism; 1,4-dihydroxy-2-naphthoate biosynthesis; 1,4-dihydroxy-2-naphthoate from chorismate: step 2/7. Its pathway is cofactor biosynthesis; phylloquinone biosynthesis. Its function is as follows. Catalyzes the thiamine diphosphate-dependent decarboxylation of 2-oxoglutarate and the subsequent addition of the resulting succinic semialdehyde-thiamine pyrophosphate anion to isochorismate to yield 2-succinyl-5-enolpyruvyl-6-hydroxy-3-cyclohexene-1-carboxylate (SEPHCHC). The sequence is that of 2-succinyl-5-enolpyruvyl-6-hydroxy-3-cyclohexene-1-carboxylate synthase from Prochlorococcus marinus (strain MIT 9313).